The primary structure comprises 230 residues: Acyl-protein thioesterase 1 (230 aa).

Active-site charge relay system residues include Ser-119, Asp-174, and His-208. Lys-224 carries the post-translational modification N6-acetyllysine.

Belongs to the AB hydrolase superfamily. AB hydrolase 2 family. As to quaternary structure, homodimer. As to expression, platelets.

The protein resides in the cytoplasm. It is found in the cell membrane. The protein localises to the nucleus membrane. Its subcellular location is the endoplasmic reticulum. The enzyme catalyses S-hexadecanoyl-L-cysteinyl-[protein] + H2O = L-cysteinyl-[protein] + hexadecanoate + H(+). The catalysed reaction is 1-hexadecanoyl-sn-glycero-3-phosphocholine + H2O = sn-glycerol 3-phosphocholine + hexadecanoate + H(+). It catalyses the reaction a 1-(9Z-octadecenoyl)-2-acyl-sn-glycero-3-phosphocholine + H2O = a 2-acyl-sn-glycero-3-phosphocholine + (9Z)-octadecenoate + H(+). Inhibited by palmostatin-B, leading to impair depalmitoylating of Ras. Functionally, acts as an acyl-protein thioesterase. Hydrolyzes fatty acids from S-acylated cysteine residues in proteins such as trimeric G alpha proteins or HRAS. Acts as a palmitoyl thioesterase that catalyzes depalmitoylation of proteins, such as ADRB2, KCNMA1 and SQSTM1. Acts as a negative regulator of autophagy by mediating palmitoylation of SQSTM1, decreasing affinity between SQSTM1 and ATG8 proteins and recruitment of ubiquitinated cargo proteins to autophagosomes. Acts as a lysophospholipase and hydrolyzes lysophosphatidylcholine (lyso-PC). Also hydrolyzes lysophosphatidylethanolamine (lyso-PE), lysophosphatidylinositol (lyso-PI) and lysophosphatidylserine (lyso-PS). Has much higher thioesterase activity than lysophospholipase activity. Contributes to the production of lysophosphatidic acid (LPA) during blood coagulation by recognizing and cleaving plasma phospholipids to generate lysophospholipids which in turn act as substrates for ENPP2 to produce LPA. This chain is Acyl-protein thioesterase 1 (LYPLA1), found in Homo sapiens (Human).